Reading from the N-terminus, the 419-residue chain is Synaptosomal-associated protein 47 (419 aa).

T-SNARE coiled-coil homology domains lie at Ala-109 to Leu-171 and Lys-356 to Leu-418.

It belongs to the SVAP1 family. As to quaternary structure, associates with the BLOC-1 complex. Interacts with BLOC1S6. Forms a complex containing SNAP47, VAMP2 and STX1A.

Its subcellular location is the endomembrane system. The protein resides in the cytoplasm. It is found in the perinuclear region. Functionally, may play a role in intracellular membrane fusion. The sequence is that of Synaptosomal-associated protein 47 (Snap47) from Rattus norvegicus (Rat).